Here is a 504-residue protein sequence, read N- to C-terminus: MATLRVDEIHKILRERIEQYNRKVGIENIGRVVQVGDGIARIIGLGEIMSGELVEFAEGTRGIALNLESKNVGIVLMGDGLMIQEGSFVKATGRIAQIPVSEAYLGRVVNALAKPIDGKGEIIASESRLIESPAPSIISRRSVYEPLQTGLIAIDSMIPIGRGQRELIIGDRQTGKTAVATDTILNQKGQGVICVYVAIGQRASSVAQVVTTFHEEGAMEYTIVVAEMADSPATLQYLAPYTGAALAEYFMYRERHTLIIYDDLSKQAQAYRQMSLLLRRPPGREAYPGDVFYLHSRLLERAAKLNSLLGEGSMTALPIVETQSGDVSAYIPTNVISITDGQIFLSADLFNAGIRPAINVGISVSRVGSAAQIKAMKQVAGKSKLELAQFAELQAFAQFASALDKTSQNQLARGRRLRELLKQSQANPLPVEEQIATIYTGTRGYLDSLEIEQVNKFLDELRKHLKDTKPQFQEIISSSKTFTEQAEILLKEAIQEQLERFSLQ.

170–177 (GDRQTGKT) lines the ATP pocket.

Belongs to the ATPase alpha/beta chains family. F-type ATPases have 2 components, CF(1) - the catalytic core - and CF(0) - the membrane proton channel. CF(1) has five subunits: alpha(3), beta(3), gamma(1), delta(1), epsilon(1). CF(0) has four main subunits: a, b, b' and c.

Its subcellular location is the plastid. The protein resides in the chloroplast thylakoid membrane. The enzyme catalyses ATP + H2O + 4 H(+)(in) = ADP + phosphate + 5 H(+)(out). Produces ATP from ADP in the presence of a proton gradient across the membrane. The alpha chain is a regulatory subunit. This is ATP synthase subunit alpha, chloroplastic from Triticum aestivum (Wheat).